A 245-amino-acid chain; its full sequence is Uridylate kinase (245 aa).

18–21 (KLSG) contacts ATP. Glycine 60 contributes to the UMP binding site. Glycine 61 and arginine 65 together coordinate ATP. UMP-binding positions include aspartate 80 and 141-148 (TGNPFFTT). Positions 168, 174, and 177 each coordinate ATP.

Belongs to the UMP kinase family. As to quaternary structure, homohexamer.

It is found in the cytoplasm. The enzyme catalyses UMP + ATP = UDP + ADP. It functions in the pathway pyrimidine metabolism; CTP biosynthesis via de novo pathway; UDP from UMP (UMPK route): step 1/1. Its activity is regulated as follows. Inhibited by UTP. In terms of biological role, catalyzes the reversible phosphorylation of UMP to UDP. The polypeptide is Uridylate kinase (Pseudomonas paraeruginosa (strain DSM 24068 / PA7) (Pseudomonas aeruginosa (strain PA7))).